A 278-amino-acid chain; its full sequence is 4-deoxy-L-threo-5-hexosulose-uronate ketol-isomerase (278 aa).

Residues His-196, His-198, Glu-203, and His-245 each coordinate Zn(2+).

The protein belongs to the KduI family. Homohexamer. Zn(2+) is required as a cofactor.

It carries out the reaction 5-dehydro-4-deoxy-D-glucuronate = 3-deoxy-D-glycero-2,5-hexodiulosonate. It functions in the pathway glycan metabolism; pectin degradation; 2-dehydro-3-deoxy-D-gluconate from pectin: step 4/5. In terms of biological role, catalyzes the isomerization of 5-dehydro-4-deoxy-D-glucuronate to 3-deoxy-D-glycero-2,5-hexodiulosonate. The sequence is that of 4-deoxy-L-threo-5-hexosulose-uronate ketol-isomerase from Escherichia coli O139:H28 (strain E24377A / ETEC).